The primary structure comprises 488 residues: RuvB-like helicase 1 (488 aa).

Residues 1–11 (MATANTSSGSM) show a composition bias toward polar residues. Positions 1–29 (MATANTSSGSMNGVGPVTMDSSTSGASRE) are disordered. 87-94 (GGPGTGKT) is an ATP binding site.

The protein belongs to the RuvB family. As to quaternary structure, may form heterododecamers with RVB2. Component of the SWR1 chromatin remodeling complex, the INO80 chromatin remodeling complex, and of the R2TP complex.

The protein localises to the nucleus. It catalyses the reaction ATP + H2O = ADP + phosphate + H(+). DNA helicase which participates in several chromatin remodeling complexes, including the SWR1 and the INO80 complexes. The SWR1 complex mediates the ATP-dependent exchange of histone H2A for the H2A variant HZT1 leading to transcriptional regulation of selected genes by chromatin remodeling. The INO80 complex remodels chromatin by shifting nucleosomes and is involved in DNA repair. Also involved in pre-rRNA processing. The chain is RuvB-like helicase 1 (RVB1) from Mycosarcoma maydis (Corn smut fungus).